The primary structure comprises 149 residues: C-type lectin domain family 2 member B (149 aa).

Residues 1-7 (MMTKHKK) lie on the Cytoplasmic side of the membrane. The helical; Signal-anchor for type II membrane protein transmembrane segment at 8 to 25 (CFIIVGVLITTNIITLIV) threads the bilayer. At 26 to 149 (KLTRDSQSLC…RKWICRKRIH (124 aa)) the chain is on the extracellular side. The cysteines at positions 35 and 46 are disulfide-linked. A C-type lectin domain is found at 42–145 (FQNKCYYFSK…CYTERKWICR (104 aa)). N-linked (GlcNAc...) asparagine glycans are attached at residues Asn57, Asn62, and Asn100. Cystine bridges form between Cys63–Cys144 and Cys123–Cys136.

In terms of assembly, homodimer. Interacts with NKp80/KLRF1. Post-translationally, (Microbial infection) Ubiquitinated by human herpesvirus 8 protein K5, leading to endolysosomal degradation. In terms of processing, N-linked glycosylated; required to enable surface expression and the extent of surface expression correlates with the number of functional conventional N-glycosylation sites. In terms of tissue distribution, expressed preferentially in lymphoid tissues, and in most hematopoietic cell types.

Its subcellular location is the cell membrane. It localises to the golgi apparatus membrane. Its function is as follows. Membrane-bound protein expressed on myeloid cells which acts as a ligand to stimulate the activating receptor NKp80/KLRF1, expressed on the surface of natural killer (NK) cells. In turn, stimulates NK-cell cytotoxicity and cytokine production leading to the cytolysis of malignant CLEC2B-expressing myeloid cells. The chain is C-type lectin domain family 2 member B (CLEC2B) from Homo sapiens (Human).